The primary structure comprises 138 residues: Translation initiation factor 5A (138 aa).

At Lys-37 the chain carries Hypusine.

This sequence belongs to the eIF-5A family.

The protein localises to the cytoplasm. Functionally, functions by promoting the formation of the first peptide bond. The protein is Translation initiation factor 5A (eif5a) of Pyrococcus horikoshii (strain ATCC 700860 / DSM 12428 / JCM 9974 / NBRC 100139 / OT-3).